Reading from the N-terminus, the 194-residue chain is NAD(P)H-quinone oxidoreductase subunit I (194 aa).

2 consecutive 4Fe-4S ferredoxin-type domains span residues 55 to 84 and 95 to 124; these read GRIHYEFDKCIACEVCVRVCPINLPVVDWE and NHYSIDFGVCIFCGNCVEYCPTNCLSMTEE. [4Fe-4S] cluster is bound by residues C64, C67, C70, C74, C104, C107, C110, and C114. The interval 173-194 is disordered; it reads DLPANAPRPGARPEDLVEKTEA. Over residues 183–194 the composition is skewed to basic and acidic residues; the sequence is ARPEDLVEKTEA.

The protein belongs to the complex I 23 kDa subunit family. As to quaternary structure, NDH-1 is composed of at least 11 different subunits. The cofactor is [4Fe-4S] cluster.

The protein resides in the cellular thylakoid membrane. The catalysed reaction is a plastoquinone + NADH + (n+1) H(+)(in) = a plastoquinol + NAD(+) + n H(+)(out). The enzyme catalyses a plastoquinone + NADPH + (n+1) H(+)(in) = a plastoquinol + NADP(+) + n H(+)(out). Functionally, NDH-1 shuttles electrons from an unknown electron donor, via FMN and iron-sulfur (Fe-S) centers, to quinones in the respiratory and/or the photosynthetic chain. The immediate electron acceptor for the enzyme in this species is believed to be plastoquinone. Couples the redox reaction to proton translocation, and thus conserves the redox energy in a proton gradient. This is NAD(P)H-quinone oxidoreductase subunit I from Nostoc sp. (strain PCC 7120 / SAG 25.82 / UTEX 2576).